The sequence spans 365 residues: Phospho-N-acetylmuramoyl-pentapeptide-transferase (365 aa).

A run of 10 helical transmembrane segments spans residues P15–I35, V51–L71, T96–F116, I121–V141, L156–E176, I180–F200, G217–A237, H238–H258, L279–F299, and T344–L364.

The protein belongs to the glycosyltransferase 4 family. MraY subfamily. The cofactor is Mg(2+).

It localises to the cell inner membrane. The enzyme catalyses UDP-N-acetyl-alpha-D-muramoyl-L-alanyl-gamma-D-glutamyl-meso-2,6-diaminopimeloyl-D-alanyl-D-alanine + di-trans,octa-cis-undecaprenyl phosphate = di-trans,octa-cis-undecaprenyl diphospho-N-acetyl-alpha-D-muramoyl-L-alanyl-D-glutamyl-meso-2,6-diaminopimeloyl-D-alanyl-D-alanine + UMP. Its pathway is cell wall biogenesis; peptidoglycan biosynthesis. In terms of biological role, catalyzes the initial step of the lipid cycle reactions in the biosynthesis of the cell wall peptidoglycan: transfers peptidoglycan precursor phospho-MurNAc-pentapeptide from UDP-MurNAc-pentapeptide onto the lipid carrier undecaprenyl phosphate, yielding undecaprenyl-pyrophosphoryl-MurNAc-pentapeptide, known as lipid I. The sequence is that of Phospho-N-acetylmuramoyl-pentapeptide-transferase from Picosynechococcus sp. (strain ATCC 27264 / PCC 7002 / PR-6) (Agmenellum quadruplicatum).